Reading from the N-terminus, the 232-residue chain is Mitochondrial import inner membrane translocase subunit Tim21 (232 aa).

Residues 1–31 (MLPRFLWRPVLCSYRALGSPSRSLTVSYRNL) constitute a mitochondrion transit peptide. A helical membrane pass occupies residues 96–116 (FTYFIVVLIGIGVTGGLFYVV).

This sequence belongs to the TIM21 family.

It localises to the mitochondrion membrane. Its function is as follows. May participate in the translocation of transit peptide-containing proteins across the mitochondrial inner membrane. The sequence is that of Mitochondrial import inner membrane translocase subunit Tim21 (timm21) from Xenopus laevis (African clawed frog).